A 549-amino-acid polypeptide reads, in one-letter code: MKRVLTALAATLPFAANAADAISGAVERQPTNWQAIIMFLIFVVFTLGITYWASKRVRSRSDYYTAGGNITGFQNGLAIAGDYMSAASFLGISALVFTSGYDGLIYSLGFLVGWPIILFLIAERLRNLGRYTFADVASYRLKQGPIRILSACGSLVVVALYLIAQMVGAGKLIELLFGLNYHIAVVLVGVLMMMYVLFGGMLATTWVQIIKAVLLLFGASFMAFMVMKHVGFSFNNLFSEAMAVHPKGVDIMKPGGLVKDPISALSLGLGLMFGTAGLPHILMRFFTVSDAREARKSVFYATGFMGYFYILTFIIGFGAIMLVGANPEYKDAAGHLIGGNNMAAVHLANAVGGNLFLGFISAVAFATILAVVAGLTLAGASAVSHDLYANVFKKGATEREELRVSKITVLILGVIAIILGVLFENQNIAFMVGLAFAIAASCNFPIILLSMYWSKLTTRGAMMGGWLGLITAVVLMILGPTIWVQILGHEKAIFPYEYPALFSISVAFLGIWFFSATDNSAEGARERELFRAQFIRSQTGFGVEQGRAH.

The next 13 helical transmembrane spans lie at W33–A53, L77–F97, G103–E123, I148–G168, I183–A203, W206–V226, I262–L282, G303–V323, L355–L375, V404–E424, I428–L448, G464–V484, and I493–F513.

It belongs to the sodium:solute symporter (SSF) (TC 2.A.21) family.

Its subcellular location is the cell inner membrane. Its function is as follows. Transports acetate. The protein is Cation/acetate symporter ActP of Escherichia coli O8 (strain IAI1).